A 320-amino-acid chain; its full sequence is 4-hydroxythreonine-4-phosphate dehydrogenase (320 aa).

T132 is a substrate binding site. Residues H161, H205, and H258 each coordinate a divalent metal cation. Substrate contacts are provided by K266, N275, and R284.

Belongs to the PdxA family. As to quaternary structure, homodimer. It depends on a divalent metal cation as a cofactor.

The protein resides in the cytoplasm. It catalyses the reaction 4-(phosphooxy)-L-threonine + NAD(+) = 3-amino-2-oxopropyl phosphate + CO2 + NADH. The protein operates within cofactor biosynthesis; pyridoxine 5'-phosphate biosynthesis; pyridoxine 5'-phosphate from D-erythrose 4-phosphate: step 4/5. Its function is as follows. Catalyzes the NAD(P)-dependent oxidation of 4-(phosphooxy)-L-threonine (HTP) into 2-amino-3-oxo-4-(phosphooxy)butyric acid which spontaneously decarboxylates to form 3-amino-2-oxopropyl phosphate (AHAP). This is 4-hydroxythreonine-4-phosphate dehydrogenase from Aquifex aeolicus (strain VF5).